Here is a 268-residue protein sequence, read N- to C-terminus: Putative carbamate hydrolase RutD (268 aa).

The 220-residue stretch at 24 to 243 (VILSAGLGGS…NATLDIAPWG (220 aa)) folds into the AB hydrolase-1 domain.

It belongs to the AB hydrolase superfamily. Hydrolase RutD family.

The catalysed reaction is carbamate + 2 H(+) = NH4(+) + CO2. Functionally, involved in pyrimidine catabolism. May facilitate the hydrolysis of carbamate, a reaction that can also occur spontaneously. The chain is Putative carbamate hydrolase RutD from Caulobacter sp. (strain K31).